We begin with the raw amino-acid sequence, 659 residues long: Nitrate import ATP-binding protein NrtC (659 aa).

The region spanning 5-239 (LAVDHVHQVF…RPRQRLEMME (235 aa)) is the ABC transporter domain. 42 to 49 (GHSGCGKS) contributes to the ATP binding site. A linker region spans residues 255–278 (QQQRRAKRRAKAAAPAPAVAASQQ). The interval 279-659 (KTVRLGFLPG…VAPIPLATSA (381 aa)) is nrtA-like.

Belongs to the ABC transporter superfamily. Nitrate/nitrite/cyanate uptake transporter (NitT) (TC 3.A.1.16) family. In terms of assembly, the complex is composed of two ATP-binding proteins (NrtC and NrtD), two transmembrane proteins (NrtB) and a solute-binding protein (NrtA).

It is found in the cell inner membrane. The catalysed reaction is nitrate(out) + ATP + H2O = nitrate(in) + ADP + phosphate + H(+). Transport is inhibited by ammonium. The C-terminal domain of NrtC is involved in the ammonium-promoted inhibition of the nitrate/nitrite transporter. In terms of biological role, part of the ABC transporter complex NrtABCD involved in nitrate uptake. The complex is probably also involved in nitrite transport. Probably responsible for energy coupling to the transport system. In Synechococcus elongatus (strain ATCC 33912 / PCC 7942 / FACHB-805) (Anacystis nidulans R2), this protein is Nitrate import ATP-binding protein NrtC.